The primary structure comprises 207 residues: Large ribosomal subunit protein uL4 (207 aa).

Residues 56-76 (EVRGGGRKPWRQKGTGRARAG) form a disordered region. Residues 60–71 (GGRKPWRQKGTG) show a composition bias toward basic residues.

The protein belongs to the universal ribosomal protein uL4 family. As to quaternary structure, part of the 50S ribosomal subunit.

One of the primary rRNA binding proteins, this protein initially binds near the 5'-end of the 23S rRNA. It is important during the early stages of 50S assembly. It makes multiple contacts with different domains of the 23S rRNA in the assembled 50S subunit and ribosome. Functionally, forms part of the polypeptide exit tunnel. The chain is Large ribosomal subunit protein uL4 from Desulfitobacterium hafniense (strain DSM 10664 / DCB-2).